The following is a 598-amino-acid chain: Probable ATP-dependent RNA helicase DDX52 (598 aa).

Lys-15 carries the N6-acetyllysine modification. Ser-39 carries the phosphoserine modification. The short motif at 166–194 (QLDQEYKINSRLLQNILDAGFQVPTPIQM) is the Q motif element. Residues 197 to 375 (IPVMLHGREL…KLNLDNVVSV (179 aa)) enclose the Helicase ATP-binding domain. Residue 210–217 (APTGSGKT) participates in ATP binding. The short motif at 319–322 (DESD) is the DEAD box element. Positions 386–547 (TVEQELLFVG…PVPEYIKGFQ (162 aa)) constitute a Helicase C-terminal domain.

Belongs to the DEAD box helicase family. DDX52/ROK1 subfamily.

It is found in the nucleus. The protein resides in the nucleolus. The catalysed reaction is ATP + H2O = ADP + phosphate + H(+). In terms of biological role, required for efficient ribosome biogenesis. May control cell cycle progression by regulating translation of mRNAs that contain a terminal oligo pyrimidine (TOP) motif in their 5' UTRs, such as GTPBP4. The polypeptide is Probable ATP-dependent RNA helicase DDX52 (Ddx52) (Mus musculus (Mouse)).